Here is a 273-residue protein sequence, read N- to C-terminus: 6-carboxyhexanoate--CoA ligase (273 aa).

The protein belongs to the BioW family. Homodimer. Requires Mg(2+) as cofactor.

The catalysed reaction is heptanedioate + ATP + CoA = 6-carboxyhexanoyl-CoA + AMP + diphosphate. It participates in metabolic intermediate metabolism; pimeloyl-CoA biosynthesis; pimeloyl-CoA from pimelate: step 1/1. Its function is as follows. Catalyzes the transformation of pimelate into pimeloyl-CoA with concomitant hydrolysis of ATP to AMP. This is 6-carboxyhexanoate--CoA ligase from Alkalihalophilus pseudofirmus (strain ATCC BAA-2126 / JCM 17055 / OF4) (Bacillus pseudofirmus).